Here is a 510-residue protein sequence, read N- to C-terminus: ATP synthase subunit alpha (510 aa).

169 to 176 (GDRQTGKT) contacts ATP.

The protein belongs to the ATPase alpha/beta chains family. F-type ATPases have 2 components, CF(1) - the catalytic core - and CF(0) - the membrane proton channel. CF(1) has five subunits: alpha(3), beta(3), gamma(1), delta(1), epsilon(1). CF(0) has three main subunits: a(1), b(2) and c(9-12). The alpha and beta chains form an alternating ring which encloses part of the gamma chain. CF(1) is attached to CF(0) by a central stalk formed by the gamma and epsilon chains, while a peripheral stalk is formed by the delta and b chains.

The protein resides in the cell inner membrane. The catalysed reaction is ATP + H2O + 4 H(+)(in) = ADP + phosphate + 5 H(+)(out). In terms of biological role, produces ATP from ADP in the presence of a proton gradient across the membrane. The alpha chain is a regulatory subunit. This chain is ATP synthase subunit alpha, found in Anaeromyxobacter dehalogenans (strain 2CP-C).